Consider the following 412-residue polypeptide: Circumsporozoite protein (412 aa).

A signal peptide spans 1–18 (MMRKLAILSVSSFLFVEA). The interval 69–328 (SRSLGENDDG…KNNNNEEPSD (260 aa)) is disordered. The span at 85–105 (NGREGKDEDKRDGNNEDNEKL) shows a compositional bias: basic and acidic residues. The interval 104-111 (KLRKPKHK) is required for the binding to heparan sulfate proteoglycans (HSPGs) on the surface of host hepatocytes. A region I; contains the proteolytic cleavage site region spans residues 112–116 (KLKQP). The segment covering 120 to 288 (NPDPNANPNV…PNANPNANPN (169 aa)) has biased composition (low complexity). 41 consecutive repeat copies span residues 123–126 (PNAN), 127–130 (PNVD), 131–134 (PNAN), 135–138 (PNVD), 139–142 (PNAN), 143–146 (PNVD), 147–150 (PNAN), 151–154 (PNAN), 155–158 (PNAN), 159–162 (PNAN), 163–166 (PNAN), 167–170 (PNAN), 171–174 (PNAN), 175–178 (PNAN), 179–182 (PNAN), 183–186 (PNAN), 187–190 (PNAN), 191–194 (PNAN), 195–198 (PNAN), 199–202 (PNAN), 203–206 (PNAN), 207–210 (PNVD), 211–214 (PNAN), 215–218 (PNAN), 219–222 (PNAN), 223–226 (PNAN), 227–230 (PNAN), 231–234 (PNAN), 235–238 (PNAN), 239–242 (PNAN), 243–246 (PNAN), 247–250 (PNAN), 251–254 (PNAN), 255–258 (PNAN), 259–262 (PNAN), 263–266 (PNAN), 267–270 (PNAN), 271–274 (PNAN), 275–278 (PNAN), 279–282 (PNAN), and 283–286 (PNAN). Positions 123 to 286 (PNANPNVDPN…ANPNANPNAN (164 aa)) are 41 X 4 AA tandem repeats of P-N-[AV]-[ND]. Residues 289–304 (KNNQGNGQGHNMPNDP) are compositionally biased toward polar residues. Over residues 310 to 324 (ENANANNAVKNNNNE) the composition is skewed to low complexity. The region spanning 337 to 390 (KIKNSISTEWSPCSVTCGNGIQVRIKPGSANKPKDELDYENDIEKKICKMEKCS) is the TSP type-1 domain. 2 disulfides stabilise this stretch: Cys349-Cys384 and Cys353-Cys389. O-linked (Fuc) threonine glycosylation is present at Thr352. Cys389 carries the GPI-anchor amidated cysteine lipid modification. Residues 390 to 412 (SSVFNVVNSSIGLIMVLSFLFLN) constitute a propeptide, removed in mature form.

The protein belongs to the plasmodium circumsporozoite protein family. In terms of processing, during host cell invasion, proteolytically cleaved at the cell membrane in the region I by a papain-like cysteine protease of parasite origin. Cleavage is triggered by the sporozoite contact with highly sulfated heparan sulfate proteoglycans (HSPGs) present on the host hepatocyte cell surface. Cleavage exposes the TSP type-1 (TSR) domain and is required for productive invasion of host hepatocytes but not for adhesion to the host cell membrane. Cleavage is dispensable for sporozoite development in the oocyst, motility and for traversal of host and vector cells. O-glycosylated; maybe by POFUT2.

It localises to the cell membrane. Its subcellular location is the cytoplasm. In terms of biological role, essential sporozoite protein. In the mosquito vector, required for sporozoite development in the oocyst, migration through the vector hemolymph and entry into the vector salivary glands. In the vertebrate host, required for sporozoite migration through the host dermis and infection of host hepatocytes. Binds to highly sulfated heparan sulfate proteoglycans (HSPGs) on the surface of host hepatocytes. In the vertebrate host, binds to highly sulfated heparan sulfate proteoglycans (HSPGs) on the surface of host hepatocytes and is required for sporozoite invasion of the host hepatocytes. In Plasmodium falciparum, this protein is Circumsporozoite protein.